Here is a 65-residue protein sequence, read N- to C-terminus: Large ribosomal subunit protein bL35 (65 aa).

Over residues 1 to 10 the composition is skewed to basic residues; it reads MPKMKSKSSA. The disordered stretch occupies residues 1 to 21; sequence MPKMKSKSSAKMRFSVRAGGT.

Belongs to the bacterial ribosomal protein bL35 family.

This Polynucleobacter necessarius subsp. necessarius (strain STIR1) protein is Large ribosomal subunit protein bL35.